A 568-amino-acid polypeptide reads, in one-letter code: MRMSNLYIPTLKEVPKEAEVVSHQLMLRAGLIRNLTAGVYSFLPLGYRVIKKIEGIIRKVMDESGAQEVLMPVIHTSDLWKESGRWEKFGPLMIKFEDRKGREYCLGPTHEEVITDLVRDEIRSYKDLPLNLYQIQTKVRDEIRPRFGLMRSREFIMKDAYSFDRDYEGLDKSYQVMYGAYTEVFNRCGLEVRAVEADTGAMGGKDSHEFMVLAESGEDDIAFCNRCDYAANVERAEARYVKSEKNEEIKPLEKVETPGKKKIDELVEFLKMPSEKMIKAVAYLADGEPVLALVRGDDELNEVKLINYLDVIELTPVVDEDFPQYYNSYAGYVGPIGLKNVRIIADRKVKDIVNGICGANEENYHFINVNPERDFSVEKYLDIRKVKEGDQCPHCEGTIEIKSGIEVGHIFKLGTKYSESMGATYLDENGKEQPIVMGSYGIGVTRLVAAAIEQNHDEHGIIWPKAIAPYQVIILPLGKGDEVNKRAEELYLELKDNNIEVLLDDRNERAGVKFNDADLIGIPLRLTIGSRSLDKGVIEARVRGTGQDYEISVEDAIKDIKKLLENVK.

It belongs to the class-II aminoacyl-tRNA synthetase family. ProS type 1 subfamily. In terms of assembly, homodimer.

The protein resides in the cytoplasm. The catalysed reaction is tRNA(Pro) + L-proline + ATP = L-prolyl-tRNA(Pro) + AMP + diphosphate. Catalyzes the attachment of proline to tRNA(Pro) in a two-step reaction: proline is first activated by ATP to form Pro-AMP and then transferred to the acceptor end of tRNA(Pro). As ProRS can inadvertently accommodate and process non-cognate amino acids such as alanine and cysteine, to avoid such errors it has two additional distinct editing activities against alanine. One activity is designated as 'pretransfer' editing and involves the tRNA(Pro)-independent hydrolysis of activated Ala-AMP. The other activity is designated 'posttransfer' editing and involves deacylation of mischarged Ala-tRNA(Pro). The misacylated Cys-tRNA(Pro) is not edited by ProRS. The chain is Proline--tRNA ligase from Halothermothrix orenii (strain H 168 / OCM 544 / DSM 9562).